We begin with the raw amino-acid sequence, 334 residues long: tRNA N6-adenosine threonylcarbamoyltransferase (334 aa).

Residues His112 and His116 each contribute to the Fe cation site. Substrate contacts are provided by residues 135 to 139 (VVSGG), Asp168, Gly181, Asp185, and Asn274. Asp303 serves as a coordination point for Fe cation.

The protein belongs to the KAE1 / TsaD family. Fe(2+) is required as a cofactor.

It localises to the cytoplasm. The catalysed reaction is L-threonylcarbamoyladenylate + adenosine(37) in tRNA = N(6)-L-threonylcarbamoyladenosine(37) in tRNA + AMP + H(+). Functionally, required for the formation of a threonylcarbamoyl group on adenosine at position 37 (t(6)A37) in tRNAs that read codons beginning with adenine. Is involved in the transfer of the threonylcarbamoyl moiety of threonylcarbamoyl-AMP (TC-AMP) to the N6 group of A37, together with TsaE and TsaB. TsaD likely plays a direct catalytic role in this reaction. In Anaeromyxobacter dehalogenans (strain 2CP-C), this protein is tRNA N6-adenosine threonylcarbamoyltransferase.